A 159-amino-acid polypeptide reads, in one-letter code: NADH-quinone oxidoreductase subunit B (159 aa).

Residues Cys37, Cys38, Cys102, and Cys132 each contribute to the [4Fe-4S] cluster site.

The protein belongs to the complex I 20 kDa subunit family. NDH-1 is composed of 14 different subunits. Subunits NuoB, C, D, E, F, and G constitute the peripheral sector of the complex. The cofactor is [4Fe-4S] cluster.

It localises to the cell inner membrane. The enzyme catalyses a quinone + NADH + 5 H(+)(in) = a quinol + NAD(+) + 4 H(+)(out). Its function is as follows. NDH-1 shuttles electrons from NADH, via FMN and iron-sulfur (Fe-S) centers, to quinones in the respiratory chain. Couples the redox reaction to proton translocation (for every two electrons transferred, four hydrogen ions are translocated across the cytoplasmic membrane), and thus conserves the redox energy in a proton gradient. The polypeptide is NADH-quinone oxidoreductase subunit B (Ruthia magnifica subsp. Calyptogena magnifica).